A 161-amino-acid polypeptide reads, in one-letter code: Phosphopantetheine adenylyltransferase (161 aa).

Thr-10 contributes to the substrate binding site. ATP contacts are provided by residues Thr-10–Phe-11 and His-18. Lys-42, Leu-75, and Arg-89 together coordinate substrate. ATP-binding positions include Gly-90–Arg-92, Glu-100, and Tyr-125–Ser-131.

It belongs to the bacterial CoaD family. In terms of assembly, homohexamer. It depends on Mg(2+) as a cofactor.

It is found in the cytoplasm. The catalysed reaction is (R)-4'-phosphopantetheine + ATP + H(+) = 3'-dephospho-CoA + diphosphate. It participates in cofactor biosynthesis; coenzyme A biosynthesis; CoA from (R)-pantothenate: step 4/5. In terms of biological role, reversibly transfers an adenylyl group from ATP to 4'-phosphopantetheine, yielding dephospho-CoA (dPCoA) and pyrophosphate. The sequence is that of Phosphopantetheine adenylyltransferase from Thermodesulfovibrio yellowstonii (strain ATCC 51303 / DSM 11347 / YP87).